A 511-amino-acid polypeptide reads, in one-letter code: V-type proton ATPase subunit B (511 aa).

ATP is bound at residue R381. A disordered region spans residues F484 to A511. Over residues Q491–P501 the composition is skewed to acidic residues. Positions D502–A511 are enriched in basic and acidic residues.

This sequence belongs to the ATPase alpha/beta chains family. V-ATPase is a heteromultimeric enzyme composed of a peripheral catalytic V1 complex (components A to H) attached to an integral membrane V0 proton pore complex (components: a, c, c', c'', d, e, f and VOA1).

The protein resides in the vacuole membrane. In terms of biological role, non-catalytic subunit of the V1 complex of vacuolar(H+)-ATPase (V-ATPase), a multisubunit enzyme composed of a peripheral complex (V1) that hydrolyzes ATP and a membrane integral complex (V0) that translocates protons. V-ATPase is responsible for acidifying and maintaining the pH of intracellular compartments. This is V-type proton ATPase subunit B (VMA2) from Candida tropicalis (Yeast).